Consider the following 396-residue polypeptide: Adenosine deaminase 1 (396 aa).

The segment at 1-26 is disordered; the sequence is MTSRSTEKSAAANPAAVSKTPSPDRI. Positions 35 and 37 each coordinate Zn(2+). Residues H37, D39, and G197 each coordinate substrate. H224 provides a ligand contact to Zn(2+). E227 (proton donor) is an active-site residue. D316 is a binding site for Zn(2+).

Belongs to the metallo-dependent hydrolases superfamily. Adenosine and AMP deaminases family. Adenosine deaminase subfamily. Homotetramer. The cofactor is Zn(2+).

It carries out the reaction adenosine + H2O + H(+) = inosine + NH4(+). It catalyses the reaction 2'-deoxyadenosine + H2O + H(+) = 2'-deoxyinosine + NH4(+). Its activity is regulated as follows. Coformycin and 2'-deoxycoformycin, whose structures mimic the transition state of the deamination reaction, are potent competitive inhibitors. Functionally, catalyzes the hydrolytic deamination of adenosine and 2-deoxyadenosine. The chain is Adenosine deaminase 1 from Streptomyces coelicolor (strain ATCC BAA-471 / A3(2) / M145).